The sequence spans 302 residues: Homoserine O-acetyltransferase (302 aa).

The active-site Acyl-thioester intermediate is the Cys142. 2 residues coordinate substrate: Lys163 and Ser192. His235 functions as the Proton acceptor in the catalytic mechanism. Glu237 is a catalytic residue. Residue Arg249 participates in substrate binding.

Belongs to the MetA family.

Its subcellular location is the cytoplasm. The catalysed reaction is L-homoserine + acetyl-CoA = O-acetyl-L-homoserine + CoA. It functions in the pathway amino-acid biosynthesis; L-methionine biosynthesis via de novo pathway; O-acetyl-L-homoserine from L-homoserine: step 1/1. Functionally, transfers an acetyl group from acetyl-CoA to L-homoserine, forming acetyl-L-homoserine. The polypeptide is Homoserine O-acetyltransferase (Bacillus pumilus (strain SAFR-032)).